Here is a 507-residue protein sequence, read N- to C-terminus: GMP synthase [glutamine-hydrolyzing] (507 aa).

A Glutamine amidotransferase type-1 domain is found at 3–190 (KILVIDYGSQ…IQGICGLKGS (188 aa)). The active-site Nucleophile is Cys77. Active-site residues include His164 and Glu166. The region spanning 191 to 382 (WTLMDFVENK…LGLPREILYR (192 aa)) is the GMPS ATP-PPase domain. 218-224 (SGGVDSS) serves as a coordination point for ATP.

As to quaternary structure, homodimer.

It carries out the reaction XMP + L-glutamine + ATP + H2O = GMP + L-glutamate + AMP + diphosphate + 2 H(+). Its pathway is purine metabolism; GMP biosynthesis; GMP from XMP (L-Gln route): step 1/1. Its function is as follows. Catalyzes the synthesis of GMP from XMP. This Petrotoga mobilis (strain DSM 10674 / SJ95) protein is GMP synthase [glutamine-hydrolyzing].